The following is a 130-amino-acid chain: Fluoride-specific ion channel FluC (130 aa).

4 helical membrane-spanning segments follow: residues 4-24 (MINV…RYFI), 35-55 (GFPI…GLLT), 68-88 (LNLF…TFSL), and 99-119 (AVFG…GVVL). Na(+) contacts are provided by G78 and T81.

The protein belongs to the fluoride channel Fluc/FEX (TC 1.A.43) family.

It localises to the cell membrane. It catalyses the reaction fluoride(in) = fluoride(out). With respect to regulation, na(+) is not transported, but it plays an essential structural role and its presence is essential for fluoride channel function. Functionally, fluoride-specific ion channel. Important for reducing fluoride concentration in the cell, thus reducing its toxicity. The sequence is that of Fluoride-specific ion channel FluC from Ruminiclostridium cellulolyticum (strain ATCC 35319 / DSM 5812 / JCM 6584 / H10) (Clostridium cellulolyticum).